A 1247-amino-acid polypeptide reads, in one-letter code: Structural polyprotein (1247 aa).

The host transcription inhibition stretch occupies residues 36-67 (RPAGQLAQLISAVSRLALRTVPQKPRRTRKIK). The disordered stretch occupies residues 53-103 (LRTVPQKPRRTRKIKKQKQVKQEQQSTRNQKKKAPKQKQTQKKKRPGRRER). Basic residues-rich tracts occupy residues 59 to 71 (KPRRTRKIKKQKQ) and 81 to 100 (NQKKKAPKQKQTQKKKRPGR). Residues 60–98 (PRRTRKIKKQKQVKQEQQSTRNQKKKAPKQKQTQKKKRP) carry the Nuclear localization signal motif. Residues 83–113 (KKKAPKQKQTQKKKRPGRRERMCMKIENDCI) are binding to the viral RNA. A ribosome-binding region spans residues 98–112 (PGRRERMCMKIENDC). Cys-112 and Cys-127 are joined by a disulfide. The Peptidase S3 domain maps to 112–260 (CIFEVKHEGK…KITPEGSVEW (149 aa)). His-138 functions as the Charge relay system in the catalytic mechanism. The short motif at 143–153 (IDNADLAKLAF) is the Nuclear export signal element. Residues 154–159 (KRSSKY) form an interaction with spike glycoprotein E2 region. The active-site Charge relay system is the Asp-160. Positions 182–192 (PEGYYNWHHGA) are dimerization of the capsid protein. The active-site Charge relay system is Ser-212. The interval 218 to 222 (DNKGR) is dimerization of the capsid protein. A functions as an uncleaved signal peptide for the precursor of protein E3/E2 region spans residues 261-273 (SLALPVMCLLANT). Intrachain disulfides connect Cys-268–Cys-277, Cys-282–Cys-286, Cys-285–Cys-317, Cys-343–Cys-449, Cys-346–Cys-352, Cys-415–Cys-429, Cys-477–Cys-590, Cys-525–Cys-549, and Cys-527–Cys-544. Asn-272 carries an N-linked (GlcNAc...) asparagine; by host glycan. Topologically, residues 325-691 (NARENFNVYK…YYYELYPTTT (367 aa)) are extracellular. The N-linked (GlcNAc...) asparagine; by host glycan is linked to Asn-587. The helical transmembrane segment at 692-712 (IAVLAAASIVVASLVGLSLGM) threads the bilayer. Residues 713–747 (CICARRRCITPYELTPGATIPFLLGILCCVKTAKA) lie on the Cytoplasmic side of the membrane. Residues 715–719 (CARRR) form an interaction with the capsid protein region. Residues Cys-720, Cys-740, and Cys-741 are each lipidated (S-palmitoyl cysteine; by host). The tract at residues 720–740 (CITPYELTPGATIPFLLGILC) is transient transmembrane before p62-6K protein processing. A disulfide bridge links Cys-720 with Cys-741. Over 748–762 (ASYYEAATYLWNEQQ) the chain is Extracellular. Residues 763–783 (PLFWLQLLIPLSAAIVVCNCL) form a helical membrane-spanning segment. Topologically, residues 784–787 (KLLP) are cytoplasmic. Residues 788 to 808 (CCCKTLTFLAVMSIGARTVSA) traverse the membrane as a helical segment. The Extracellular segment spans residues 809 to 1223 (YEHATVIPNT…AMSWVQKITG (415 aa)). Cystine bridges form between Cys-857-Cys-922, Cys-870-Cys-902, Cys-871-Cys-904, and Cys-876-Cys-886. An E1 fusion peptide loop region spans residues 892–909 (VYPFMWGGAYCFCDAENT). N-linked (GlcNAc...) asparagine; by host glycosylation is found at Asn-949 and Asn-1078. 4 disulfide bridges follow: Cys-1067–Cys-1079, Cys-1109–Cys-1184, Cys-1114–Cys-1188, and Cys-1136–Cys-1178. Residues 1224-1244 (GVGLVVAIAALILIIVLCVSF) traverse the membrane as a helical segment. The S-palmitoyl cysteine; by host moiety is linked to residue Cys-1241. The Cytoplasmic portion of the chain corresponds to 1245-1247 (SRH).

Homodimer. Homomultimer. Interacts with host karyopherin KPNA4; this interaction allows the nuclear import of the viral capsid protein. Interacts with spike glycoprotein E2. Interacts with host IRAK1; the interaction leads to inhibition of IRAK1-dependent signaling. As to quaternary structure, the precursor of protein E3/E2 and E1 form a heterodimer shortly after synthesis. In terms of assembly, the precursor of protein E3/E2 and E1 form a heterodimer shortly after synthesis. Processing of the precursor of protein E3/E2 into E2 and E3 results in a heterodimer of the spike glycoproteins E2 and E1. Spike at virion surface are constituted of three E2-E1 heterodimers. After target cell attachment and endocytosis, E1 change conformation to form homotrimers. Interacts with 6K protein. Interacts with spike glycoprotein E1. Processing of the precursor of protein E3/E2 into E2 and E3 results in a heterodimer of the spike glycoproteins E2 and E1. Spike at virion surface are constituted of a trimer of E2-E1 heterodimers. Interacts with 6K protein. Interacts with host MXRA8; this interaction mediates virus entry. As to quaternary structure, oligomer. Interacts with spike glycoprotein E1. Interacts with spike glycoprotein E2. Structural polyprotein: Specific enzymatic cleavages in vivo yield mature proteins. Capsid protein is auto-cleaved during polyprotein translation, unmasking a signal peptide at the N-terminus of the precursor of E3/E2. The remaining polyprotein is then targeted to the host endoplasmic reticulum, where host signal peptidase cleaves it into pE2, 6K and E1 proteins. pE2 is further processed to mature E3 and E2 by host furin in trans-Golgi vesicle. Post-translationally, palmitoylated via thioester bonds. These palmitoylations may induce disruption of the C-terminus transmembrane. This would result in the reorientation of E2 C-terminus from lumenal to cytoplasmic side. In terms of processing, N-glycosylated. Palmitoylated via thioester bonds.

The protein localises to the virion. It localises to the host cytoplasm. The protein resides in the host cell membrane. Its subcellular location is the host nucleus. It is found in the virion membrane. The protein localises to the host Golgi apparatus. It localises to the host trans-Golgi network. The protein resides in the host endoplasmic reticulum. It catalyses the reaction Autocatalytic release of the core protein from the N-terminus of the togavirus structural polyprotein by hydrolysis of a -Trp-|-Ser- bond.. Forms an icosahedral capsid with a T=4 symmetry composed of 240 copies of the capsid protein surrounded by a lipid membrane through which penetrate 80 spikes composed of trimers of E1-E2 heterodimers. The capsid protein binds to the viral RNA genome at a site adjacent to a ribosome binding site for viral genome translation following genome release. Possesses a protease activity that results in its autocatalytic cleavage from the nascent structural protein. Following its self-cleavage, the capsid protein transiently associates with ribosomes, and within several minutes the protein binds to viral RNA and rapidly assembles into icosahedric core particles. The resulting nucleocapsid eventually associates with the cytoplasmic domain of the spike glycoprotein E2 at the cell membrane, leading to budding and formation of mature virions. In case of infection, new virions attach to target cells and after clathrin-mediated endocytosis their membrane fuses with the host endosomal membrane. This leads to the release of the nucleocapsid into the cytoplasm, followed by an uncoating event necessary for the genomic RNA to become accessible. The uncoating might be triggered by the interaction of capsid proteins with ribosomes. Binding of ribosomes would release the genomic RNA since the same region is genomic RNA-binding and ribosome-binding. Specifically inhibits interleukin-1 receptor-associated kinase 1/IRAK1-dependent signaling during viral entry, representing a means by which the alphaviruses may evade innate immune detection and activation prior to viral gene expression. In terms of biological role, provides the signal sequence for the translocation of the precursor of protein E3/E2 to the host endoplasmic reticulum. Furin-cleaved E3 remains associated with spike glycoprotein E1 and mediates pH protection of the latter during the transport via the secretory pathway. After virion release from the host cell, the assembly protein E3 is gradually released in the extracellular space. Functionally, plays a role in viral attachment to target host cell, by binding to the cell receptor MXRA8. Synthesized as a p62 precursor which is processed by furin at the cell membrane just before virion budding, giving rise to E2-E1 heterodimer. The p62-E1 heterodimer is stable, whereas E2-E1 is unstable and dissociate at low pH. p62 is processed at the last step, presumably to avoid E1 fusion activation before its final export to cell surface. E2 C-terminus contains a transitory transmembrane that would be disrupted by palmitoylation, resulting in reorientation of the C-terminal tail from lumenal to cytoplasmic side. This step is critical since E2 C-terminus is involved in budding by interacting with capsid proteins. This release of E2 C-terminus in cytoplasm occurs lately in protein export, and precludes premature assembly of particles at the endoplasmic reticulum membrane. Its function is as follows. Acts as a viroporin that participates in virus glycoprotein processing and transport to the plasma membrane, cell permeabilization and budding of viral particles. Disrupts the calcium homeostasis of the cell, probably at the endoplasmic reticulum level. This leads to cytoplasmic calcium elevation. Because of its lipophilic properties, the 6K protein is postulated to influence the selection of lipids that interact with the transmembrane domains of the glycoproteins, which, in turn, affects the deformability of the bilayer required for the extreme curvature that occurs as budding proceeds. Present in low amount in virions, about 3% compared to viral glycoproteins. Class II viral fusion protein. Fusion activity is inactive as long as E1 is bound to E2 in mature virion. After virus attachment to target cell via host MXRA8 and endocytosis, acidification of the endosome induce dissociation of E1/E2 heterodimer and concomitant trimerization of the E1 subunits. This E1 trimer is fusion active, and promotes release of viral nucleocapsid in cytoplasm after endosome and viral membrane fusion. Efficient fusion requires the presence of cholesterol and sphingolipid in the target membrane. This chain is Structural polyprotein, found in Anopheles (Human).